We begin with the raw amino-acid sequence, 3057 residues long: MSLALNDLLICCRQLEHDRATERRKAVENFRHLIQDPETVQHLDQHSDSKQGKYLNWDAAFRFLQKYIQKETECLRTAKQNVSASTQATRQKKMQEISSLVKYFIKCANKRAPRLKCQELLNYIMDTVRDSSNNPIYGADYSNILLKDILSVRKYWCEISQQQWRELFLIYFTLYLKPSQDINRLLVARIIQAVTKGCCSQTDGLNSEFLDFFTKAIQNARQEKSSPGLNHILAAYVIFLKTLAANFRIRVCELGDKILPTLLYIWTQHRLNDSLKEVIVELFQLQVYMHHPKGAKTQEKGAYESAKWKSILYNLYDLLVNEISRIGSRGKYSSGSRNIAVKENLIELMADICHQVFNEDTRSLEISQSYTTTQREFSDYNAPCKKRKIELGWGVIKDHLQKSQNDFDVVPWLQIATQLISKYPASLPNCELSPLLMILYQLLPQQRRGERTPYVLRCLMEVALCQGKKPNLESSHKSDLLKIWIKIWSITFRGISSEQIQAENFGLLGAIIQGSLVEVDREFWKLFTGSACKPSCPTVCCLTLALKTCVVPETVETGMENICDGNRKFSLKESIMKWLLFCQLEDDFEDRIELPPILHSNFPHLALEKILVSLIMKNCKAAMNFFQSVPECEQHQKDTEEPSLLEVEELFLQTTFDKMDFLTVVQECTIEKHQSSVGFSFHQNLKESLDRYLLGLSEQLLNNYLPETSDSETLVRCSSLLVGVLGCYCYVGVIAEEEAYTSELFQKAKSLMQCAGESITLFKSKTNEESRIISLRNMMHLCTNCLYKCAKRSPNKIASGFFLRLLTSKLMHDIADVCRSLAFIIKKPFDCREVESMEDDTDKNLMEMNDQSSMSLFNDNPASSVIDANESGESQITMGAMNPLAEEHLSKQDLLVLDMLRFLCMCITIAQSNTMSFRAADIRRKLLMLIDSDRLDPTKSLHLHMYLVLLKELPGEEYPLPMEDVVELLKPLSSVCSLYRRDQDVCKTILNHVLHIVPNLCRENVDAESTRDAQGQFLTVIGAFWHLTKEGKCTFSVRLALVKCLKTLLEADPYSRWAILNVMEKDFPVNEVFPQFLADNHHQVCMLAAGLINRLFQHMKQGDSSTIMRALPLKLQQTAFENAYLKAQERIRQVKSQGGENRELLDEICNRKAVLLTMIAVVLCCSPVCEKQALFALCKSVKENGLEPHLIKKVLEKVSETFGYRHLEDFMASHLDYLVLEWLHLQDAEYSLSSFPFILLNYTNIEDFYRSCYKVLIPHLVMRCHFDEVKSIANQIQGDWKSLLTDCFPKILVNILPYFAYEDTGDRGMAQQRETASKVYDMLKDENLLGKQIDQLFINNLPEIVVELLMTLHEPATSDASQSTDPCDFSGDLDPRPNPPHFPSHVIKATFAYISNCHKTKLKSILEVLSKSPDSYQKILLAICEQAAETNNVYKKHRILKIYHLFVSLLLKDMKSGLGGAWAFVLRDVIYTLIHYINKRPSRFMDVSLRSFSLCCDLLSRVCHTAVTYSKDALESHLHVIVGTLIPLVDGQMEVQKQVLDLLKYLVIDNKDNENLYVMIKLLDPFPDNAVFKDLRITQQEIKYSKGPFSLLEEINHFLSVSVYDALPLTRLEGLKDLRRQLAQHKDQMMDLMRASQDNPQDGIVVKLVVSLLQLSKMAVNHTGEREVLEAVGRCLGEVGPIDFSTIAIQHSKDMPYTKALELFEDKEHHWTLMMLTYLNSTLVEDCVKVRSAAVTCLKSILATKTGHGFWEIFKTTADPMLTYLLPFRTSRKKFLEVPRLNKESPLEGLDDISLWIPQSENHDIWIKTLTCALLDSGGINSEVLQLLKPMCEVKTDFCQTVLPYLIHDILLQDTNESWRSLLSTHIQGFFTNCFRHSSQTSRSTTPANMDSESEHVFRCHLDKKSQRTMLAVVDYMRRQKRSSSGTVFDDAFWLELNYLEVAKVAQSCAAHFTALLYAEIYADKKNMDDQEKRSPTFEEGSQSTTISSLSEKSKEETGISLQDLLLEIYRSIGEPDSLYGCGGGKMLQPLTRLRTYEHEAMWGKALVTYDLETAISSSTRQAGIIQALQNLGLCHILSVYLKGLDHENKEQCAELQELHYQVAWRNMQWDSCVSVNKGMEGTSYHESLYNALQSLRDREFSTFYESLKYARVKEVEELCKGSLESVYSLYPTLSRLQAIGELENIGELFSRSVTDRQPSEVYNKWWKHSQLLKDSDFSFQEPIMALRTVILEILMEKEMENSQRECLKDILTKHLVELSLLARTFQNTQLPERAIFQIKQYNSANCGVSEWQLEEAQVFWAKKEQSLALSILKQMIKKLDASCTENDPRLKLIHIECLRVCGTWLAETCLENPAVIMQTYLEKAVELAGNYDGESNDELRNGKMKAFLSLARFSDTQYQRIENYMKSSEFENKQALLKRAKEEVGLLREHKIQTNRYTIKVQRELELDEGALRALKKDRKRFLCKAVENYINCLLSGEGHDMWIFRLCSLWLENSGVSEVNGMMKRDGMKIPSYKFLPLMYQLAARMGTKMMGGLGFHDVLNSLISRISVDHPHHTLFIILALANANKDEFLTKPEAARSSRITKNTPKESSQLDEDRTEAANKVICTLRNRRRQMVRSVEALCDAYIILANLDATQWRTQRKGIRIPADQPITKLKNLEDVVVPTMEIKVDPTGEYGNMVTIQSFKPEFRLAGGLNLPKIIDCVGSDGKERRQLVKGRDDLRQDAVMQQVFQMCNTLLQRNTETRKRKLTICTYKVVPLSQRSGVLEWCTGTVPIGEYLVNNDTGAHKRYRPKDFSPVQCQKKMMEAQNKSFEEKYEIFMNICQNFQPVFRYFCMEKFLDPAVWFERRLAYTQSVATSSIVGYILGLGDRHVQNILINEQSAELVHIDLGVAFEQGKILPTPETVPFRLTRDIVDGMGITGVEGVFRRCCEKTMEVMRNSQETLLTIVEVLLYDPLFDWTMNPLKALYLQQRPEDESELHSTPRADDQECKRNLSDTDQSFNKVAERVLMRLQEKLKGVEEGTVLSVGGQVNFLIQQAMDPKNLSKLFSGWKAWV.

Ser2 carries the post-translational modification N-acetylserine. Ser367 carries the phosphoserine modification. An interaction with ABL1 region spans residues 1374–1383 (DPRPNPPHFP). Ser1894 carries the phosphoserine modification. The FAT domain maps to 1941-2567 (EVAKVAQSCA…LFIILALANA (627 aa)). 2 disordered regions span residues 1970–1995 (DQEK…EKSK) and 2578–2598 (AARS…LDED). 2 stretches are compositionally biased toward polar residues: residues 1980–1991 (EGSQSTTISSLS) and 2582–2592 (SRITKNTPKES). Ser1982 bears the Phosphoserine; by autocatalysis mark. The residue at position 1984 (Ser1984) is a Phosphoserine. Residues 2687 to 2999 (FKPEFRLAGG…QECKRNLSDT (313 aa)) form the PI3K/PI4K catalytic domain. Positions 2693-2699 (LAGGLNL) are G-loop. The catalytic loop stretch occupies residues 2868-2876 (GLGDRHVQN). Residues 2888-2912 (HIDLGVAFEQGKILPTPETVPFRLT) are activation loop. A compositionally biased stretch (basic and acidic residues) spans 2977–2997 (DESELHSTPRADDQECKRNLS). The tract at residues 2977 to 2998 (DESELHSTPRADDQECKRNLSD) is disordered. The residue at position 2997 (Ser2997) is a Phosphoserine. Lys3017 carries the N6-acetyllysine modification. In terms of domain architecture, FATC spans 3025-3057 (TVLSVGGQVNFLIQQAMDPKNLSKLFSGWKAWV). Positions 3047 to 3049 (SKL) match the Microbody targeting signal; atypical motif.

This sequence belongs to the PI3/PI4-kinase family. ATM subfamily. Homodimer. Dimers or tetramers in inactive state. On DNA damage, autophosphorylation dissociates ATM into monomers rendering them catalytically active. Binds p53/TP53, ABL1, BRCA1 and TERF1. Interacts with NBN (via FxF/Y motif). Part of the BRCA1-associated genome surveillance complex (BASC), which contains BRCA1, MSH2, MSH6, MLH1, ATM, BLM, PMS2 and the RAD50-MRE11-NBN protein complex. This association could be a dynamic process changing throughout the cell cycle and within subnuclear domains. Interacts with RAD17; DNA damage promotes the association. Interacts with EEF1E1; the interaction, induced on DNA damage, up-regulates TP53. Interacts with KAT8, NABP2, ATMIN and CEP164. Interacts with AP2B1 and AP3B2; the interaction occurs in cytoplasmic vesicles. Interacts with TELO2 and TTI1. Interacts with DDX1. Interacts with BRAT1. Interacts with CYREN (via XLF motif). Interacts (via microbody targeting signal) with PEX5; promoting translocation to peroxisomes in response to reactive oxygen species (ROS). In terms of processing, phosphorylated by NUAK1/ARK5. Autophosphorylation on Ser-367, Ser-1894, Ser-1982 correlates with DNA damage-mediated activation of the kinase. During the late stages of DNA damage response, dephosphorylated following deacetylation by SIRT7, leading to ATM deactivation. Post-translationally, acetylation, on DNA damage, is required for activation of the kinase activity, dimer-monomer transition, and subsequent autophosphorylation on Ser-1982. Acetylated in vitro by KAT5/TIP60. Deacetylated by SIRT7 during the late stages of DNA damage response, promoting ATM dephosphorylation and subsequent deactivation.

It localises to the nucleus. It is found in the cytoplasmic vesicle. The protein resides in the cytoplasm. Its subcellular location is the cytoskeleton. The protein localises to the microtubule organizing center. It localises to the centrosome. It is found in the peroxisome matrix. It catalyses the reaction L-seryl-[protein] + ATP = O-phospho-L-seryl-[protein] + ADP + H(+). The enzyme catalyses L-threonyl-[protein] + ATP = O-phospho-L-threonyl-[protein] + ADP + H(+). With respect to regulation, activated by the MRN (MRE11-RAD50-NBS1) complex in response to DNA double strand breaks (DSBs), which recruits ATM to DSBs and promotes its activation. Inhibited by wortmannin. Functionally, serine/threonine protein kinase which activates checkpoint signaling upon double strand breaks (DSBs), apoptosis and genotoxic stresses such as ionizing ultraviolet A light (UVA), thereby acting as a DNA damage sensor. Recognizes the substrate consensus sequence [ST]-Q. Phosphorylates 'Ser-139' of histone variant H2AX at double strand breaks (DSBs), thereby regulating DNA damage response mechanism. Also plays a role in pre-B cell allelic exclusion, a process leading to expression of a single immunoglobulin heavy chain allele to enforce clonality and monospecific recognition by the B-cell antigen receptor (BCR) expressed on individual B-lymphocytes. After the introduction of DNA breaks by the RAG complex on one immunoglobulin allele, acts by mediating a repositioning of the second allele to pericentromeric heterochromatin, preventing accessibility to the RAG complex and recombination of the second allele. Also involved in signal transduction and cell cycle control. May function as a tumor suppressor. Necessary for activation of ABL1 and SAPK. Phosphorylates DYRK2, CHEK2, p53/TP53, FBXW7, FANCD2, NFKBIA, BRCA1, CREBBP/CBP, RBBP8/CTIP, FBXO46, MRE11, nibrin (NBN), RAD50, RAD17, PELI1, TERF1, UFL1, RAD9, UBQLN4 and DCLRE1C. May play a role in vesicle and/or protein transport. Could play a role in T-cell development, gonad and neurological function. Binds DNA ends. Plays a role in replication-dependent histone mRNA degradation. Phosphorylation of DYRK2 in nucleus in response to genotoxic stress prevents its MDM2-mediated ubiquitination and subsequent proteasome degradation. Phosphorylates ATF2 which stimulates its function in DNA damage response. Phosphorylates ERCC6 which is essential for its chromatin remodeling activity at DNA double-strand breaks. Phosphorylates TTC5/STRAP at 'Ser-203' in the cytoplasm in response to DNA damage, which promotes TTC5/STRAP nuclear localization. Also involved in pexophagy by mediating phosphorylation of PEX5: translocated to peroxisomes in response to reactive oxygen species (ROS), and catalyzes phosphorylation of PEX5, promoting PEX5 ubiquitination and induction of pexophagy. The sequence is that of Serine-protein kinase ATM (ATM) from Sus scrofa (Pig).